Here is an 89-residue protein sequence, read N- to C-terminus: Small ribosomal subunit protein uS19 (89 aa).

Belongs to the universal ribosomal protein uS19 family.

Protein S19 forms a complex with S13 that binds strongly to the 16S ribosomal RNA. This is Small ribosomal subunit protein uS19 from Xanthomonas axonopodis pv. citri (strain 306).